The primary structure comprises 68 residues: Putative membrane protein insertion efficiency factor (68 aa).

This sequence belongs to the UPF0161 family.

The protein localises to the cell membrane. Its function is as follows. Could be involved in insertion of integral membrane proteins into the membrane. The chain is Putative membrane protein insertion efficiency factor from Herpetosiphon aurantiacus (strain ATCC 23779 / DSM 785 / 114-95).